Consider the following 410-residue polypeptide: NADH-quinone oxidoreductase subunit H (410 aa).

Transmembrane regions (helical) follow at residues 11–31, 79–99, 119–139, 160–180, 192–212, 257–277, 283–303, 317–337, and 347–367; these read LVAA…LVAI, FVYF…FAFI, LPVA…GIVL, VISY…MAGT, GVWY…SMVG, ALAA…NMWA, WWPL…YFWL, ALGW…AAII, and YWTP…VLLL. Positions 376-410 are disordered; sequence ARASARQRGDEGTSPEPAFPTPPLLAGATKENAGG.

Belongs to the complex I subunit 1 family. As to quaternary structure, NDH-1 is composed of 14 different subunits. Subunits NuoA, H, J, K, L, M, N constitute the membrane sector of the complex.

It localises to the cell membrane. The enzyme catalyses a quinone + NADH + 5 H(+)(in) = a quinol + NAD(+) + 4 H(+)(out). In terms of biological role, NDH-1 shuttles electrons from NADH, via FMN and iron-sulfur (Fe-S) centers, to quinones in the respiratory chain. The immediate electron acceptor for the enzyme in this species is believed to be menaquinone. Couples the redox reaction to proton translocation (for every two electrons transferred, four hydrogen ions are translocated across the cytoplasmic membrane), and thus conserves the redox energy in a proton gradient. The sequence is that of NADH-quinone oxidoreductase subunit H from Mycobacterium bovis (strain ATCC BAA-935 / AF2122/97).